The following is a 242-amino-acid chain: Small ribosomal subunit protein uS2 (242 aa).

It belongs to the universal ribosomal protein uS2 family.

The sequence is that of Small ribosomal subunit protein uS2 from Mannheimia succiniciproducens (strain KCTC 0769BP / MBEL55E).